Reading from the N-terminus, the 360-residue chain is Photosystem II protein D1 (360 aa).

3 helical membrane passes run 29-46, 118-133, and 142-156; these read YIGW…TATS, HFLL…EWEL, and WIFV…AASA. Residue histidine 118 coordinates chlorophyll a. Residue tyrosine 126 participates in pheophytin a binding. The [CaMn4O5] cluster site is built by aspartate 170 and glutamate 189. The chain crosses the membrane as a helical span at residues 197 to 218; the sequence is FHMAGVAGVFGGSLFSAMHGSL. Histidine 198 contacts chlorophyll a. A quinone contacts are provided by residues histidine 215 and 264 to 265; that span reads SF. Histidine 215 contributes to the Fe cation binding site. Histidine 272 is a binding site for Fe cation. The helical transmembrane segment at 274–288 threads the bilayer; the sequence is FLAAWPVVGIWLTAL. Histidine 332, glutamate 333, aspartate 342, and alanine 344 together coordinate [CaMn4O5] cluster. A propeptide spanning residues 345–360 is cleaved from the precursor; sequence SNEVLPVAVNAPAVNG.

The protein belongs to the reaction center PufL/M/PsbA/D family. As to quaternary structure, PSII is composed of 1 copy each of membrane proteins PsbA, PsbB, PsbC, PsbD, PsbE, PsbF, PsbH, PsbI, PsbJ, PsbK, PsbL, PsbM, PsbT, PsbX, PsbY, PsbZ, Psb30/Ycf12, at least 3 peripheral proteins of the oxygen-evolving complex and a large number of cofactors. It forms dimeric complexes. It depends on The D1/D2 heterodimer binds P680, chlorophylls that are the primary electron donor of PSII, and subsequent electron acceptors. It shares a non-heme iron and each subunit binds pheophytin, quinone, additional chlorophylls, carotenoids and lipids. D1 provides most of the ligands for the Mn4-Ca-O5 cluster of the oxygen-evolving complex (OEC). There is also a Cl(-1) ion associated with D1 and D2, which is required for oxygen evolution. The PSII complex binds additional chlorophylls, carotenoids and specific lipids. as a cofactor. In terms of processing, tyr-161 forms a radical intermediate that is referred to as redox-active TyrZ, YZ or Y-Z. Post-translationally, C-terminally processed by CTPA; processing is essential to allow assembly of the oxygen-evolving complex and thus photosynthetic growth.

Its subcellular location is the plastid. The protein resides in the chloroplast thylakoid membrane. It carries out the reaction 2 a plastoquinone + 4 hnu + 2 H2O = 2 a plastoquinol + O2. Photosystem II (PSII) is a light-driven water:plastoquinone oxidoreductase that uses light energy to abstract electrons from H(2)O, generating O(2) and a proton gradient subsequently used for ATP formation. It consists of a core antenna complex that captures photons, and an electron transfer chain that converts photonic excitation into a charge separation. The D1/D2 (PsbA/PsbD) reaction center heterodimer binds P680, the primary electron donor of PSII as well as several subsequent electron acceptors. The protein is Photosystem II protein D1 of Heterosigma akashiwo (Chromophytic alga).